The chain runs to 342 residues: Protease HtpX homolog (342 aa).

The next 2 helical transmembrane spans lie at 6 to 26 and 28 to 48; these read TAML…LIGG and GGMM…YWNS. Histidine 130 is a binding site for Zn(2+). Glutamate 131 is a catalytic residue. Histidine 134 serves as a coordination point for Zn(2+). 2 helical membrane-spanning segments follow: residues 145–165 and 173–193; these read ITAT…FFGG and GGGI…AMLV. Residue glutamate 202 participates in Zn(2+) binding. The disordered stretch occupies residues 290–342; sequence PQHSKPAASGPWGSSAERSTDDPWGVKGGASTRSVPKIGRRGKDNDAPKGPWN.

The protein belongs to the peptidase M48B family. Zn(2+) serves as cofactor.

The protein localises to the cell inner membrane. In Allorhizobium ampelinum (strain ATCC BAA-846 / DSM 112012 / S4) (Agrobacterium vitis (strain S4)), this protein is Protease HtpX homolog.